The primary structure comprises 72 residues: Translation initiation factor IF-1 (72 aa).

The region spanning 1-72 (MSKEDVIEMQ…TRGRITWRAK (72 aa)) is the S1-like domain.

The protein belongs to the IF-1 family. In terms of assembly, component of the 30S ribosomal translation pre-initiation complex which assembles on the 30S ribosome in the order IF-2 and IF-3, IF-1 and N-formylmethionyl-tRNA(fMet); mRNA recruitment can occur at any time during PIC assembly.

It is found in the cytoplasm. In terms of biological role, one of the essential components for the initiation of protein synthesis. Stabilizes the binding of IF-2 and IF-3 on the 30S subunit to which N-formylmethionyl-tRNA(fMet) subsequently binds. Helps modulate mRNA selection, yielding the 30S pre-initiation complex (PIC). Upon addition of the 50S ribosomal subunit IF-1, IF-2 and IF-3 are released leaving the mature 70S translation initiation complex. The sequence is that of Translation initiation factor IF-1 from Clostridium acetobutylicum (strain ATCC 824 / DSM 792 / JCM 1419 / IAM 19013 / LMG 5710 / NBRC 13948 / NRRL B-527 / VKM B-1787 / 2291 / W).